The chain runs to 231 residues: Lipoprotein-releasing system ATP-binding protein LolD (231 aa).

An ABC transporter domain is found at 9–230 (FSLKDVGKEY…LRAGELYDQN (222 aa)). 45–52 (GASGSGKS) contributes to the ATP binding site.

It belongs to the ABC transporter superfamily. Lipoprotein translocase (TC 3.A.1.125) family. In terms of assembly, the complex is composed of two ATP-binding proteins (LolD) and two transmembrane proteins (LolC and LolE).

The protein localises to the cell inner membrane. Part of the ABC transporter complex LolCDE involved in the translocation of mature outer membrane-directed lipoproteins, from the inner membrane to the periplasmic chaperone, LolA. Responsible for the formation of the LolA-lipoprotein complex in an ATP-dependent manner. This is Lipoprotein-releasing system ATP-binding protein LolD from Oleidesulfovibrio alaskensis (strain ATCC BAA-1058 / DSM 17464 / G20) (Desulfovibrio alaskensis).